The sequence spans 859 residues: DNA mismatch repair protein MutS (859 aa).

622–629 contacts ATP; the sequence is GPNMGGKS.

It belongs to the DNA mismatch repair MutS family.

Functionally, this protein is involved in the repair of mismatches in DNA. It is possible that it carries out the mismatch recognition step. This protein has a weak ATPase activity. The protein is DNA mismatch repair protein MutS of Coxiella burnetii (strain RSA 493 / Nine Mile phase I).